We begin with the raw amino-acid sequence, 592 residues long: Beta-fructofuranosidase, insoluble isoenzyme 1 (592 aa).

Residues 1–39 form the signal peptide; that stretch reads MGVTIRNRNYDHGSLPFLQSLLAILLVTTTTLHINGVEA. The propeptide occupies 40–48; the sequence is FHEIHYNLQ. Residue Asp-74 is part of the active site. Asn-170 carries N-linked (GlcNAc...) (complex) asparagine glycosylation. Residue Asn-195 is glycosylated (N-linked (GlcNAc...) asparagine). An N-linked (GlcNAc...) (complex) asparagine glycan is attached at Asn-311. A glycan (N-linked (GlcNAc...) (high mannose) asparagine) is linked at Asn-348. An N-linked (GlcNAc...) asparagine glycan is attached at Asn-570.

It belongs to the glycosyl hydrolase 32 family. As to expression, in leaves and roots of young plants.

It is found in the secreted. It localises to the cell wall. The enzyme catalyses Hydrolysis of terminal non-reducing beta-D-fructofuranoside residues in beta-D-fructofuranosides.. Functionally, may play an important role in phloem unloading and in stress response. The chain is Beta-fructofuranosidase, insoluble isoenzyme 1 (INV1) from Daucus carota (Wild carrot).